Reading from the N-terminus, the 143-residue chain is Ribosome-binding factor A (143 aa).

Residues 119–129 (AVGDKPAVPRD) show a composition bias toward basic and acidic residues. The segment at 119–143 (AVGDKPAVPRDDNDDPVSDNPERDA) is disordered.

This sequence belongs to the RbfA family. As to quaternary structure, monomer. Binds 30S ribosomal subunits, but not 50S ribosomal subunits or 70S ribosomes.

The protein localises to the cytoplasm. Its function is as follows. One of several proteins that assist in the late maturation steps of the functional core of the 30S ribosomal subunit. Associates with free 30S ribosomal subunits (but not with 30S subunits that are part of 70S ribosomes or polysomes). Required for efficient processing of 16S rRNA. May interact with the 5'-terminal helix region of 16S rRNA. This chain is Ribosome-binding factor A, found in Marinobacter nauticus (strain ATCC 700491 / DSM 11845 / VT8) (Marinobacter aquaeolei).